The following is a 430-amino-acid chain: Serine--tRNA ligase (430 aa).

237 to 239 provides a ligand contact to L-serine; sequence TAE. 268–270 contributes to the ATP binding site; the sequence is RSE. An L-serine-binding site is contributed by Glu291. 355 to 358 serves as a coordination point for ATP; the sequence is EISS. Ser391 serves as a coordination point for L-serine.

It belongs to the class-II aminoacyl-tRNA synthetase family. Type-1 seryl-tRNA synthetase subfamily. As to quaternary structure, homodimer. The tRNA molecule binds across the dimer.

Its subcellular location is the cytoplasm. The catalysed reaction is tRNA(Ser) + L-serine + ATP = L-seryl-tRNA(Ser) + AMP + diphosphate + H(+). It carries out the reaction tRNA(Sec) + L-serine + ATP = L-seryl-tRNA(Sec) + AMP + diphosphate + H(+). It functions in the pathway aminoacyl-tRNA biosynthesis; selenocysteinyl-tRNA(Sec) biosynthesis; L-seryl-tRNA(Sec) from L-serine and tRNA(Sec): step 1/1. Its function is as follows. Catalyzes the attachment of serine to tRNA(Ser). Is also able to aminoacylate tRNA(Sec) with serine, to form the misacylated tRNA L-seryl-tRNA(Sec), which will be further converted into selenocysteinyl-tRNA(Sec). The protein is Serine--tRNA ligase of Klebsiella pneumoniae (strain 342).